Here is an 86-residue protein sequence, read N- to C-terminus: MANIKSQQKRILTNERRRLRNKSVKSSLHTAVRGFRAAVEAGDKDKAGELLASTSRKLDKAASKGVIHKNQAANRKSALAKALQKI.

Belongs to the bacterial ribosomal protein bS20 family.

Its function is as follows. Binds directly to 16S ribosomal RNA. The chain is Small ribosomal subunit protein bS20 from Mycolicibacterium vanbaalenii (strain DSM 7251 / JCM 13017 / BCRC 16820 / KCTC 9966 / NRRL B-24157 / PYR-1) (Mycobacterium vanbaalenii).